A 291-amino-acid polypeptide reads, in one-letter code: Putative transport permease ycf38 (291 aa).

6 helical membrane-spanning segments follow: residues 47–67 (ATLM…GGLF), 87–107 (SGII…PLMF), 135–155 (FMTC…LFMG), 165–185 (LIFA…SLAL), 195–215 (LLAL…ALAP), and 262–282 (ISLG…AYIV). In terms of domain architecture, ABC transmembrane type-2 spans 47 to 289 (ATLMAGIIQP…YIVSNILKAR (243 aa)).

Belongs to the ABC-2 integral membrane protein family.

The protein localises to the plastid. The protein resides in the chloroplast membrane. This Porphyra purpurea (Red seaweed) protein is Putative transport permease ycf38 (ycf38).